The chain runs to 481 residues: Cysteine--tRNA ligase (481 aa).

A Zn(2+)-binding site is contributed by cysteine 29. The 'HIGH' region motif lies at valine 31 to histidine 41. Zn(2+) contacts are provided by cysteine 209, histidine 234, and glutamate 238. Residues lysine 266 to serine 270 carry the 'KMSKS' region motif. Residue lysine 269 coordinates ATP.

Belongs to the class-I aminoacyl-tRNA synthetase family. Monomer. Zn(2+) is required as a cofactor.

Its subcellular location is the cytoplasm. It catalyses the reaction tRNA(Cys) + L-cysteine + ATP = L-cysteinyl-tRNA(Cys) + AMP + diphosphate. This is Cysteine--tRNA ligase from Geobacter sulfurreducens (strain ATCC 51573 / DSM 12127 / PCA).